The sequence spans 380 residues: Adaptive-response sensory kinase SasA (380 aa).

The tract at residues 20–101 (LLFVANRPGD…QKVDYWWPRW (82 aa)) is kaiB-like domain, interacts with KaiC. The Histidine kinase domain occupies 157 to 380 (LLAHELRNPL…CFHFTLPVYS (224 aa)). His160 carries the phosphohistidine; by autocatalysis modification.

In terms of assembly, homotrimer with a small amount of possible homohexamer; a protein fragment of 109-380 is also a homotrimer. Interacts with KaiC, probably as 1 SasA trimer:1 KaiC homohexamer; unphosphorylated SasA has the highest affinity. Homodimer. Binds to the B-loop in the CI domain of KaiC; SasA and KaiB(fs) compete to bind to the CI domain. Binds preferentially to doubly phosphorylated KaiC. Autophosphorylates, probably on His-160.

The enzyme catalyses ATP + protein L-histidine = ADP + protein N-phospho-L-histidine.. Its function is as follows. Member of the two-component regulatory system SasA/RpaA involved in genome-wide circadian gene expression. One of several clock output pathways. Participates in the Kai clock protein complex, the main circadian regulator in cyanobacteria, via its interaction with KaiC. KaiC enhances the autophosphorylation activity of SasA, which then transfers its phosphate group to RpaA to activate it. In addition to its output function, recruits fold-shifted KaiB (KaiB(fs)) to KaiC to cooperatively form the KaiB(6):KaiC(6) complex (independent of SasA kinase activity). Required for robustness of the circadian rhythm of gene expression and is involved in clock output, also required for adaptation to light/dark cycles. This Thermosynechococcus vestitus (strain NIES-2133 / IAM M-273 / BP-1) protein is Adaptive-response sensory kinase SasA.